Here is a 65-residue protein sequence, read N- to C-terminus: Small ribosomal subunit protein bS21 (65 aa).

Belongs to the bacterial ribosomal protein bS21 family.

The chain is Small ribosomal subunit protein bS21 from Chlorobium limicola (strain DSM 245 / NBRC 103803 / 6330).